The following is a 269-amino-acid chain: Formamidopyrimidine-DNA glycosylase (269 aa).

Pro-2 serves as the catalytic Schiff-base intermediate with DNA. The Proton donor role is filled by Glu-3. The Proton donor; for beta-elimination activity role is filled by Lys-57. Residues His-90, Arg-109, and Arg-150 each contribute to the DNA site. The segment at 235 to 269 (QVYGKAGEQCPNCAELIQELKIGQRNTFYCSSCQV) adopts an FPG-type zinc-finger fold. The Proton donor; for delta-elimination activity role is filled by Arg-259.

Belongs to the FPG family. As to quaternary structure, monomer. The cofactor is Zn(2+).

The catalysed reaction is Hydrolysis of DNA containing ring-opened 7-methylguanine residues, releasing 2,6-diamino-4-hydroxy-5-(N-methyl)formamidopyrimidine.. It catalyses the reaction 2'-deoxyribonucleotide-(2'-deoxyribose 5'-phosphate)-2'-deoxyribonucleotide-DNA = a 3'-end 2'-deoxyribonucleotide-(2,3-dehydro-2,3-deoxyribose 5'-phosphate)-DNA + a 5'-end 5'-phospho-2'-deoxyribonucleoside-DNA + H(+). Its function is as follows. Involved in base excision repair of DNA damaged by oxidation or by mutagenic agents. Acts as a DNA glycosylase that recognizes and removes damaged bases. Has a preference for oxidized purines, such as 7,8-dihydro-8-oxoguanine (8-oxoG). Has AP (apurinic/apyrimidinic) lyase activity and introduces nicks in the DNA strand. Cleaves the DNA backbone by beta-delta elimination to generate a single-strand break at the site of the removed base with both 3'- and 5'-phosphates. The sequence is that of Formamidopyrimidine-DNA glycosylase from Vibrio atlanticus (strain LGP32) (Vibrio splendidus (strain Mel32)).